Reading from the N-terminus, the 538-residue chain is Cytosolic Fe-S cluster assembly factor NAR1 homolog (538 aa).

The [4Fe-4S] cluster site is built by Cys19, Cys64, Cys67, Cys70, Cys218, Cys273, Cys453, and Cys457.

Belongs to the NARF family.

It localises to the cytoplasm. It is found in the nucleus. Component of the cytosolic Fe/S protein assembly machinery. Required for maturation of extramitochondrial Fe/S proteins. May play a role in the transfer of pre-assembled Fe/S clusters to target apoproteins. The protein is Cytosolic Fe-S cluster assembly factor NAR1 homolog of Schizosaccharomyces pombe (strain 972 / ATCC 24843) (Fission yeast).